A 250-amino-acid polypeptide reads, in one-letter code: MMIDLNADLGEGGANDSALLQLVSSANIACGFHAGDAGLMVQSVREALKYGVAVGAHPGYPDRENFGRTAMDLPPETVYAQMLYQIGALAAIVQAQGGELQHVKPHGMLYNQAAKSPPLADAIARAIRDVNPKLVLVGLAGSELIRAGQHYGLTTRQEVFADRGYLADGSLVPRSQPGALIDSEEQALAQTLEMVQHHRVRSISGEWANVVAQTVCLHGDGPHALDFARRLRAAFAGRHILVSAQLDAEA.

The protein belongs to the LamB/PxpA family. Forms a complex composed of PxpA, PxpB and PxpC.

The enzyme catalyses 5-oxo-L-proline + ATP + 2 H2O = L-glutamate + ADP + phosphate + H(+). Functionally, catalyzes the cleavage of 5-oxoproline to form L-glutamate coupled to the hydrolysis of ATP to ADP and inorganic phosphate. The sequence is that of 5-oxoprolinase subunit A from Klebsiella pneumoniae (strain 342).